We begin with the raw amino-acid sequence, 115 residues long: NADH-ubiquinone oxidoreductase chain 3 (115 aa).

A run of 3 helical transmembrane segments spans residues 3–23 (FALI…ITFW), 55–75 (FFLV…LLPL), and 84–104 (LPLM…SLAY).

This sequence belongs to the complex I subunit 3 family. Core subunit of respiratory chain NADH dehydrogenase (Complex I) which is composed of 45 different subunits. Interacts with TMEM186. Interacts with TMEM242.

Its subcellular location is the mitochondrion inner membrane. It carries out the reaction a ubiquinone + NADH + 5 H(+)(in) = a ubiquinol + NAD(+) + 4 H(+)(out). In terms of biological role, core subunit of the mitochondrial membrane respiratory chain NADH dehydrogenase (Complex I) which catalyzes electron transfer from NADH through the respiratory chain, using ubiquinone as an electron acceptor. Essential for the catalytic activity of complex I. This is NADH-ubiquinone oxidoreductase chain 3 from Homo sapiens (Human).